Reading from the N-terminus, the 439-residue chain is MPETQEPASLNERDPMFEREKEKYERPIVSREYILSYLEGTGRPLTLEDIIAELEVAEDDQEALRRRLRAMERDGQLVRNRRGAYGIVAAMELVRGTVSAHPDGFGFLIPEAGGKDLFLSPREMRKVFHGDTILGRAVGEDRRGRIEGAVVRILERALKHIVGRYYADNGVHYVVPEDRRIPQEFAVVEGEGEGLTPVHGQIVILEITQYPDGRNMPQGHVVEILGEHMAPGMEVEIAVRNYGLPHQWPDEVLAEIKQFSETVPETMKAGRRDLRDLPLVTIDGADAKDFDDAVYAEVIENGFRLTVAIADVATYVCPDSALDREAVTRGNSVYFPRRVIPMLPEILSNGLCSLNPHVDRLCMFCEMEMDAAGRSTGFRFDRGIIGSQRRFTYDEVAAILAGDAELRAQDAAMVPHLEALHSLYESFAKARERRGTIEF.

Residues 1–22 (MPETQEPASLNERDPMFEREKE) form a disordered region. Residues 11–22 (NERDPMFEREKE) show a composition bias toward basic and acidic residues. Residues 271-439 (RRDLRDLPLV…ARERRGTIEF (169 aa)) enclose the RNB domain.

The protein belongs to the RNR ribonuclease family. RNase R subfamily.

It is found in the cytoplasm. It catalyses the reaction Exonucleolytic cleavage in the 3'- to 5'-direction to yield nucleoside 5'-phosphates.. In terms of biological role, 3'-5' exoribonuclease that releases 5'-nucleoside monophosphates and is involved in maturation of structured RNAs. The sequence is that of Ribonuclease R (rnr) from Acidithiobacillus ferrooxidans (Thiobacillus ferrooxidans).